Here is a 511-residue protein sequence, read N- to C-terminus: Pickpocket protein 19 (511 aa).

2 consecutive transmembrane segments (helical) span residues 59 to 79 and 471 to 491; these read LWLA…TVLM and GIIS…LFVL.

It belongs to the amiloride-sensitive sodium channel (TC 1.A.6) family. In terms of tissue distribution, expressed in the tracheal system. Expressed in the taste-sensing terminal organ of the larval head. In adults, expressed in hairs on the tibia, femur and wing margin, but not in hairs on the tarsi of the leg.

Its subcellular location is the membrane. In terms of biological role, part of a complex that plays a role in tracheal liquid clearance. In both larvae and adults, contributes to the behavioral response to salt. Probable role in sodium transport. The protein is Pickpocket protein 19 (ppk19) of Drosophila melanogaster (Fruit fly).